Consider the following 237-residue polypeptide: UPF0502 protein RB6530 (237 aa).

Residues 187 to 202 (ASSAAPSQAESGSTSP) are compositionally biased toward polar residues. The segment at 187–211 (ASSAAPSQAESGSTSPAKAANDDRI) is disordered.

Belongs to the UPF0502 family.

The chain is UPF0502 protein RB6530 from Rhodopirellula baltica (strain DSM 10527 / NCIMB 13988 / SH1).